The following is a 382-amino-acid chain: Galactokinase (382 aa).

34 to 37 (EHTD) lines the substrate pocket. 124–130 (GAGLSSS) lines the ATP pocket. Residues Ser130 and Glu162 each coordinate Mg(2+). Residue Asp174 is the Proton acceptor of the active site. Residue Tyr223 coordinates substrate.

The protein belongs to the GHMP kinase family. GalK subfamily.

It localises to the cytoplasm. The enzyme catalyses alpha-D-galactose + ATP = alpha-D-galactose 1-phosphate + ADP + H(+). The protein operates within carbohydrate metabolism; galactose metabolism. Catalyzes the transfer of the gamma-phosphate of ATP to D-galactose to form alpha-D-galactose-1-phosphate (Gal-1-P). This is Galactokinase from Salmonella newport (strain SL254).